The primary structure comprises 202 residues: MTLLNQYTGIVIPINISNIDTDVIIPKQFLKKINKKGFGKYLFYNWRFNDNEGKNINKNFILNDLRYKKSSILLTRDNFGCGSSREHAVWALMDYGFKVIIASSFGDIFYNNCLNNHLIPIILSENKINTLFDITSNYIDVSFTIDLKNNTILAKNYAYYFKIDALHKFCIMHQLDQIDLTMKNEKKITKYEKKIFDFFIKK.

It belongs to the LeuD family. LeuD type 1 subfamily. As to quaternary structure, heterodimer of LeuC and LeuD.

The catalysed reaction is (2R,3S)-3-isopropylmalate = (2S)-2-isopropylmalate. The protein operates within amino-acid biosynthesis; L-leucine biosynthesis; L-leucine from 3-methyl-2-oxobutanoate: step 2/4. In terms of biological role, catalyzes the isomerization between 2-isopropylmalate and 3-isopropylmalate, via the formation of 2-isopropylmaleate. This chain is 3-isopropylmalate dehydratase small subunit, found in Buchnera aphidicola subsp. Pemphigus spyrothecae.